The primary structure comprises 213 residues: Protein Tpen_0748 (213 aa).

Residues 7-207 (EEGALLVRLA…ETTPKGDVVE (201 aa)) enclose the AMMECR1 domain.

The protein is Protein Tpen_0748 of Thermofilum pendens (strain DSM 2475 / Hrk 5).